The primary structure comprises 809 residues: MQFPESWLRSFVNPPIATAELSHRLTMAGLEVEEVDPVAPPFSQIVVGHVVEVNKHPDADRLNVCKVDAGTGELLQIVCGAPNVSVGIKVPCALVGAELPPGDDGKPFKIKIGKLRGVESYGMLCSARELKLSEEHGGLLILPEDTPVGADIRKVLDLDDQIFIIKLTPNKADCLSIHGVAREVSALTGAPITLPTMAPVAVTLSDKLPVKVEAPDLCGRFAGRIIRGVNARAKTPAWMVSRIERAGMRSVSALVDISNYVMLELGRPSHVFDLDKIHGGLTVRWGKPGEQLKLLNGDTVTVDDKVGVISDEQAIESLAGIMGGDKTAVTLDTQNIYVEAAFWWPAAIQGRARRYNFSTDAGHRFERGVDYATIVEHIERISALILDICGGQAGPIDDQIVNCPKREPVRMRVARAARVLGIPLSHEVVSDVFKRLGLTFSVDGDVFVVEPPSYRFDIEIEEDLIEEVARIYGFEQIPAKPPVAENAMRPTNEARRTMHDVRHAVAARDYHEVVNFAFVETEWEADFAGNTQPIPLLNPIASQYSVMRSTLIGGLLDKVRYNLNRKASRVRLFEVGRVFRRDAEVADGGLSVAGYAQPMRVGGIAYGPAAEEQWGVPARAVDFFDVKGDVESLLWPLQARFERAEHSALHPGRAARVVLDGRAVGWIGELHPRWLQKYELPTAPVVWELDLDAITAVGLPAYREVPRVPAVTRDIALVVRQDVGVQDLVDAFEKAAAGMPWQRYLQGVVLFDEFRPKAATAAIGAQEKSLAFRITLQDTDSTLQDDLVEAATQQLIRAAGDAFGARLRA.

Positions 39 to 153 (APPFSQIVVG…EDTPVGADIR (115 aa)) constitute a tRNA-binding domain. Positions 404-479 (PKREPVRMRV…RIYGFEQIPA (76 aa)) constitute a B5 domain. Mg(2+) contacts are provided by D457, D463, E466, and E467. In terms of domain architecture, FDX-ACB spans 706–808 (PRVPAVTRDI…AGDAFGARLR (103 aa)).

The protein belongs to the phenylalanyl-tRNA synthetase beta subunit family. Type 1 subfamily. In terms of assembly, tetramer of two alpha and two beta subunits. Requires Mg(2+) as cofactor.

The protein resides in the cytoplasm. The enzyme catalyses tRNA(Phe) + L-phenylalanine + ATP = L-phenylalanyl-tRNA(Phe) + AMP + diphosphate + H(+). This Ralstonia nicotianae (strain ATCC BAA-1114 / GMI1000) (Ralstonia solanacearum) protein is Phenylalanine--tRNA ligase beta subunit.